Consider the following 147-residue polypeptide: Deoxyuridine 5'-triphosphate nucleotidohydrolase (147 aa).

Residues 63–65 (RSG), Asn-76, and 80–82 (TID) each bind substrate.

This sequence belongs to the dUTPase family. Mg(2+) is required as a cofactor.

It carries out the reaction dUTP + H2O = dUMP + diphosphate + H(+). The protein operates within pyrimidine metabolism; dUMP biosynthesis; dUMP from dCTP (dUTP route): step 2/2. This enzyme is involved in nucleotide metabolism: it produces dUMP, the immediate precursor of thymidine nucleotides and it decreases the intracellular concentration of dUTP so that uracil cannot be incorporated into DNA. The polypeptide is Deoxyuridine 5'-triphosphate nucleotidohydrolase (Chlamydia caviae (strain ATCC VR-813 / DSM 19441 / 03DC25 / GPIC) (Chlamydophila caviae)).